The primary structure comprises 535 residues: MKKISLKTLRKSFNLNKSKEETDFMVVQQPSLASDFGKDDSLFGSCYGKDMASCDINGEDEKGGKNRSKSESLMGTLKRRLSAKQKSKGKAGTPSGSSADEDTFSSSSAPIVFKDVRAQRPIRSTSLRSHHYSPTPWPLRPTNSEETCIKMEVRVKALVHSSSPSPALNGVRKDFHDLQSETACQEQANSLKSSASHNGDLHLHLDEHVPVVIGLMPQDYIQYTVPLDEGMYPLEGSRSYCLDSSSPMEVSAVPPQVGGRSFPEDESQVDQDLVVAPEIFVDQSVNGLLIGTTGVMLQSPRAGQDDVPPLSPLLPPMQNNQIQRNFSGLTGTEAHVAESMRCHLNFDPNSAPGVARVYDSVQSSGPMVVTSLTEELKKLAKQGWYWGPITRWEAEGKLANVPDGSFLVRDSSDDRYLLSLSFRSHGKTLHTRIEHSNGRFSFYEQPDVEGHTSIVDLIEHSIRDSENGAFCYSRSRLPGSATYPVRLTNPVSRFMQVRSLQYLCRFVIRQYTRIDLIQKLPLPNKMKDYLQEKHY.

The span at 80–89 (RLSAKQKSKG) shows a compositional bias: basic residues. The tract at residues 80-105 (RLSAKQKSKGKAGTPSGSSADEDTFS) is disordered. The 108-residue stretch at 384 to 491 (WYWGPITRWE…TYPVRLTNPV (108 aa)) folds into the SH2 domain. In terms of domain architecture, SOCS box spans 486-535 (RLTNPVSRFMQVRSLQYLCRFVIRQYTRIDLIQKLPLPNKMKDYLQEKHY).

In terms of assembly, interacts with RBCK1. Interacts with phosphorylated IRS4. Interacts with KIT (phosphorylated). Interacts with PIM3.

The protein operates within protein modification; protein ubiquitination. In terms of biological role, SOCS family proteins form part of a classical negative feedback system that regulates cytokine signal transduction. May be a substrate recognition component of a SCF-like ECS (Elongin BC-CUL2/5-SOCS-box protein) E3 ubiquitin-protein ligase complex which mediates the ubiquitination and subsequent proteasomal degradation of target proteins. Regulates KIT degradation by ubiquitination of the tyrosine-phosphorylated receptor. In Pongo abelii (Sumatran orangutan), this protein is Suppressor of cytokine signaling 6 (SOCS6).